The sequence spans 477 residues: Glycogen synthase (477 aa).

An ADP-alpha-D-glucose-binding site is contributed by Lys-15.

Belongs to the glycosyltransferase 1 family. Bacterial/plant glycogen synthase subfamily.

The catalysed reaction is [(1-&gt;4)-alpha-D-glucosyl](n) + ADP-alpha-D-glucose = [(1-&gt;4)-alpha-D-glucosyl](n+1) + ADP + H(+). It participates in glycan biosynthesis; glycogen biosynthesis. In terms of biological role, synthesizes alpha-1,4-glucan chains using ADP-glucose. This Shigella boydii serotype 4 (strain Sb227) protein is Glycogen synthase.